The chain runs to 304 residues: uncharacterized protein (304 aa).

The N-terminal stretch at 1-22 (MKKSLTLLILLLCSLLFSTVLS) is a signal peptide. Residues 91–111 (PAPAPTPESSDPDEPMKPDDS) form a disordered region. 4 N-linked (GlcNAc...) asparagine glycosylation sites follow: N133, N160, N183, and N233. S282 carries the GPI-anchor amidated serine lipid modification. The propeptide at 283 to 304 (SSHLFGVLPFLPLVLCIFLFLL) is removed in mature form.

Its subcellular location is the cell membrane. This is an uncharacterized protein from Arabidopsis thaliana (Mouse-ear cress).